Consider the following 461-residue polypeptide: Spermidine/putrescine import ATP-binding protein PotA (461 aa).

Positions 10–240 (IEVNGVSKFF…PINSFVADFI (231 aa)) constitute an ABC transporter domain. 42 to 49 (GPSGCGKT) is a binding site for ATP.

The protein belongs to the ABC transporter superfamily. Spermidine/putrescine importer (TC 3.A.1.11.1) family. As to quaternary structure, the complex is composed of two ATP-binding proteins (PotA), two transmembrane proteins (PotB and PotC) and a solute-binding protein (PotD).

The protein localises to the cell inner membrane. The catalysed reaction is ATP + H2O + polyamine-[polyamine-binding protein]Side 1 = ADP + phosphate + polyamineSide 2 + [polyamine-binding protein]Side 1.. Its function is as follows. Part of the ABC transporter complex PotABCD involved in spermidine/putrescine import. Responsible for energy coupling to the transport system. The chain is Spermidine/putrescine import ATP-binding protein PotA from Bacteroides fragilis (strain YCH46).